Here is a 564-residue protein sequence, read N- to C-terminus: Arginine--tRNA ligase (564 aa).

Positions 136-146 (ANPTGPLHMGN) match the 'HIGH' region motif.

Belongs to the class-I aminoacyl-tRNA synthetase family. Monomer.

Its subcellular location is the cytoplasm. It catalyses the reaction tRNA(Arg) + L-arginine + ATP = L-arginyl-tRNA(Arg) + AMP + diphosphate. The sequence is that of Arginine--tRNA ligase from Ruminiclostridium cellulolyticum (strain ATCC 35319 / DSM 5812 / JCM 6584 / H10) (Clostridium cellulolyticum).